The following is a 350-amino-acid chain: MSKSRKPSLLPPGPVMVDVAGGQLTEQEKQRLRHPLVGGVILFARNFENRAQLTALTQDIHAARGEPLLIAVDHEGGRVQRFREDGFTALPAMRTLGEVWDRDPLAAMQLATQTGYVLAAELRACGVDMSFTPVLDLDYGVSKVIGNRAFHADPRVVAMLARALVQGLALTGMAACGKHFPGHGYVEADSHHEIPVDTRTLADILKDDAAPYGWLGDQILPSVMPAHVIYPEVDSQPAGFSRRWVSEILRGQLGYDGVVFSDDLTMEGASVAGDILARAQAALSAGCDMVLVCNRPDLADDLLERLSFTPPAVDRIRRLMPAYAAPDWDSLQADSRYQHARRIQSQIISG.

Residues aspartate 73, arginine 81, arginine 148, and 178–179 contribute to the substrate site; that span reads KH. Residue histidine 191 is the Proton donor/acceptor of the active site. The Nucleophile role is filled by aspartate 262.

This sequence belongs to the glycosyl hydrolase 3 family. NagZ subfamily.

Its subcellular location is the cytoplasm. The enzyme catalyses Hydrolysis of terminal non-reducing N-acetyl-D-hexosamine residues in N-acetyl-beta-D-hexosaminides.. It functions in the pathway cell wall biogenesis; peptidoglycan recycling. In terms of biological role, plays a role in peptidoglycan recycling by cleaving the terminal beta-1,4-linked N-acetylglucosamine (GlcNAc) from peptide-linked peptidoglycan fragments, giving rise to free GlcNAc, anhydro-N-acetylmuramic acid and anhydro-N-acetylmuramic acid-linked peptides. In Bordetella avium (strain 197N), this protein is Beta-hexosaminidase.